Reading from the N-terminus, the 320-residue chain is Ribosomal protein L11 methyltransferase (320 aa).

4 residues coordinate S-adenosyl-L-methionine: Thr165, Gly186, Asp208, and Asn251.

This sequence belongs to the methyltransferase superfamily. PrmA family.

It is found in the cytoplasm. It catalyses the reaction L-lysyl-[protein] + 3 S-adenosyl-L-methionine = N(6),N(6),N(6)-trimethyl-L-lysyl-[protein] + 3 S-adenosyl-L-homocysteine + 3 H(+). Its function is as follows. Methylates ribosomal protein L11. This chain is Ribosomal protein L11 methyltransferase, found in Limosilactobacillus fermentum (strain NBRC 3956 / LMG 18251) (Lactobacillus fermentum).